The chain runs to 201 residues: Pyridoxal 5'-phosphate synthase subunit PdxT (201 aa).

Residue 49 to 51 (GES) participates in L-glutamine binding. C81 serves as the catalytic Nucleophile. Residues R110 and 139–140 (IR) contribute to the L-glutamine site. Active-site charge relay system residues include H175 and E177.

The protein belongs to the glutaminase PdxT/SNO family. In the presence of PdxS, forms a dodecamer of heterodimers. Only shows activity in the heterodimer.

The enzyme catalyses aldehydo-D-ribose 5-phosphate + D-glyceraldehyde 3-phosphate + L-glutamine = pyridoxal 5'-phosphate + L-glutamate + phosphate + 3 H2O + H(+). It carries out the reaction L-glutamine + H2O = L-glutamate + NH4(+). It functions in the pathway cofactor biosynthesis; pyridoxal 5'-phosphate biosynthesis. Functionally, catalyzes the hydrolysis of glutamine to glutamate and ammonia as part of the biosynthesis of pyridoxal 5'-phosphate. The resulting ammonia molecule is channeled to the active site of PdxS. The polypeptide is Pyridoxal 5'-phosphate synthase subunit PdxT (Streptomyces avermitilis (strain ATCC 31267 / DSM 46492 / JCM 5070 / NBRC 14893 / NCIMB 12804 / NRRL 8165 / MA-4680)).